Here is a 393-residue protein sequence, read N- to C-terminus: Argininosuccinate synthase (393 aa).

Residues 10–18 (AYSGGLDTS) and A37 contribute to the ATP site. Y88 is a binding site for L-citrulline. Residue G118 participates in ATP binding. Positions 120, 124, and 125 each coordinate L-aspartate. L-citrulline is bound at residue N124. 5 residues coordinate L-citrulline: R128, S176, S185, E261, and Y273.

The protein belongs to the argininosuccinate synthase family. Type 1 subfamily. In terms of assembly, homotetramer.

The protein resides in the cytoplasm. The enzyme catalyses L-citrulline + L-aspartate + ATP = 2-(N(omega)-L-arginino)succinate + AMP + diphosphate + H(+). It participates in amino-acid biosynthesis; L-arginine biosynthesis; L-arginine from L-ornithine and carbamoyl phosphate: step 2/3. The polypeptide is Argininosuccinate synthase (Carsonella ruddii (strain PV)).